A 1254-amino-acid polypeptide reads, in one-letter code: Zinc finger protein BRUTUS (1254 aa).

Positions 1 to 40 (MATPLPDFETARGGGAVASSSTTVLPSSVSSSSSSSRPLP) are disordered. The span at 19–40 (SSSTTVLPSSVSSSSSSSRPLP) shows a compositional bias: low complexity. A helical transmembrane segment spans residues 201 to 221 (FLCSIPVNMLAVFLPWISSSI). The disordered stretch occupies residues 893-913 (GSPDSSSTETSKPSPQKDNDH). The segment covering 895–906 (PDSSSTETSKPS) has biased composition (polar residues). The CHY-type zinc finger occupies 999-1068 (PEKQIYGCEH…PICTTPSCDG (70 aa)). Zn(2+) contacts are provided by C1006, H1008, C1019, C1020, C1026, C1029, H1030, H1036, C1048, C1051, C1061, C1066, C1076, C1079, H1090, C1091, C1094, C1097, H1109, C1110, C1113, C1116, H1124, and C1126. Residues 1071–1134 (MAKHYCSICK…KCLEKSLETN (64 aa)) form a CTCHY-type zinc finger. Residues 1135 to 1176 (CPICCEFLFTSSEAVRALPCGHYMHSACFQAYTCSHYTCPIC) form an RING-type; atypical zinc finger.

As to quaternary structure, interacts with the PYEL proteins bHLH115, bHLH104 and ILR3 in the nucleus. Binds zinc and iron ions. Expressed in cotyledons of seedlings, young leaves, developing and mature embryos, and other reproductive tissues including floral vasculature, funiculus, septum, and gynoecium valves.

It is found in the membrane. The protein resides in the nucleus. The protein operates within protein modification; protein ubiquitination. Functionally, essential protein. Negatively regulates the response to iron deficiency and thus contributes to iron homeostasis. Exhibits E3 ubiquitin-protein ligase activity in vitro. Plays a role in root growth, rhizosphere acidification, and iron reductase activity in response to iron deprivation. Facilitates 26S proteasome-mediated degradation of PYEL proteins in the absence of iron. This is Zinc finger protein BRUTUS from Arabidopsis thaliana (Mouse-ear cress).